The chain runs to 179 residues: Probable DNA-directed RNA polymerase subunit delta (179 aa).

An HTH HARE-type domain is found at 14-81 (MSLVELAYEI…GDQRWGLRSW (68 aa)). The interval 108-179 (VVEEDFDEIE…DDLDDNEEEK (72 aa)) is disordered. Positions 109 to 179 (VEEDFDEIEE…DDLDDNEEEK (71 aa)) are enriched in acidic residues.

Belongs to the RpoE family. In terms of assembly, RNAP is composed of a core of 2 alpha, a beta and a beta' subunits. The core is associated with a delta subunit and one of several sigma factors.

Its function is as follows. Participates in both the initiation and recycling phases of transcription. In the presence of the delta subunit, RNAP displays an increased specificity of transcription, a decreased affinity for nucleic acids, and an increased efficiency of RNA synthesis because of enhanced recycling. This chain is Probable DNA-directed RNA polymerase subunit delta, found in Bacillus pumilus (strain SAFR-032).